The sequence spans 671 residues: DNA ligase (671 aa).

NAD(+)-binding positions include 32–36 (DAEYD), 81–82 (SL), and Glu113. Lys115 serves as the catalytic N6-AMP-lysine intermediate. NAD(+) is bound by residues Arg136, Glu173, Lys290, and Lys314. Residues Cys408, Cys411, Cys426, and Cys432 each coordinate Zn(2+). Residues 593–671 (EIDSPFAGKT…EAEMLRLLGV (79 aa)) form the BRCT domain.

It belongs to the NAD-dependent DNA ligase family. LigA subfamily. Requires Mg(2+) as cofactor. It depends on Mn(2+) as a cofactor.

The enzyme catalyses NAD(+) + (deoxyribonucleotide)n-3'-hydroxyl + 5'-phospho-(deoxyribonucleotide)m = (deoxyribonucleotide)n+m + AMP + beta-nicotinamide D-nucleotide.. Functionally, DNA ligase that catalyzes the formation of phosphodiester linkages between 5'-phosphoryl and 3'-hydroxyl groups in double-stranded DNA using NAD as a coenzyme and as the energy source for the reaction. It is essential for DNA replication and repair of damaged DNA. This Salmonella arizonae (strain ATCC BAA-731 / CDC346-86 / RSK2980) protein is DNA ligase.